We begin with the raw amino-acid sequence, 1203 residues long: Zinc finger and BTB domain-containing protein 38 (1203 aa).

In terms of domain architecture, BTB spans 33-100 (CDVTIIVEDT…IYSSTVVVRR (68 aa)). A Glycyl lysine isopeptide (Lys-Gly) (interchain with G-Cter in SUMO2) cross-link involves residue K43. S130 carries the phosphoserine modification. Glycyl lysine isopeptide (Lys-Gly) (interchain with G-Cter in SUMO2) cross-links involve residues K145, K148, K151, and K260. The interval 230–334 (EAYRSQPLRE…PSETPGPPAA (105 aa)) is disordered. Over residues 269 to 280 (TQTQDSDSTTEN) the composition is skewed to polar residues. Positions 299–522 (PAPILSHSEP…RRYQCIFCLE (224 aa)) are interaction with CBFA2T3. Positions 313-322 (GDVHFPREDE) are enriched in basic and acidic residues. The segment at 341–363 (YNCSCCSKSFDSSTLLGAHMQLH) adopts a C2H2-type 1 zinc-finger fold. A C2H2-type 2; degenerate zinc finger spans residues 370–394 (FVCKYCNKQFTTLNRLDRHEQICMR). C2H2-type zinc fingers lie at residues 459 to 481 (YSCVVCKRSYVTLSSLRRHANVH), 487 to 509 (YPCHYCNKVFALAEYRTRHEIWH), and 515 to 538 (YQCIFCLETFMTYYILKNHQKSFH). Residues K549 and K556 each participate in a glycyl lysine isopeptide (Lys-Gly) (interchain with G-Cter in SUMO2) cross-link. Composition is skewed to polar residues over residues 581-598 (RNSSYESAQGNRQRNESP), 607-628 (LPSSEMPTLNFQDGRNSLTSSP), 635-644 (PSWQGTPTSA), and 731-741 (SNHQSPSQPVA). 2 disordered regions span residues 581-644 (RNSS…PTSA) and 731-776 (SNHQ…VPCN). A compositionally biased stretch (basic and acidic residues) spans 747-757 (KDSKPEADKAS). Glycyl lysine isopeptide (Lys-Gly) (interchain with G-Cter in SUMO2) cross-links involve residues K750, K755, K796, K806, K813, K834, K842, and K849. Disordered stretches follow at residues 857–882 (KPKYQMQEETLPRESDPETRGDSPLG) and 895–914 (FDEVSDQDSTDKPWRPYYNY). Basic and acidic residues predominate over residues 866 to 877 (TLPRESDPETRG). Residues K915, K971, K976, K984, K988, K998, K1024, and K1033 each participate in a glycyl lysine isopeptide (Lys-Gly) (interchain with G-Cter in SUMO2) cross-link. C2H2-type zinc fingers lie at residues 1017-1039 (YICELCAKQFQSSSTLKMHMRCH), 1045-1067 (YQCKTCGRRFSVQGNLQKHERIH), 1073-1095 (FICQYCNKAFTLNETLKIHERIH), 1101-1123 (YHCQFCFQGFLYLSTKRNHERRH), and 1132-1154 (FACFQCPKICKTAAALRMHQKKH). Residues K1116, K1139, K1142, K1157, and K1190 each participate in a glycyl lysine isopeptide (Lys-Gly) (interchain with G-Cter in SUMO2) cross-link. Residues 1172–1203 (NSDLLESQPCTDSEDSDQKDDIKKPLLKMSFE) are disordered.

Interacts with CBFA2T3, ZBTB4 and RBBP6. Ubiquitinated by RBBP6; leading to its degradation by the proteasome. As to expression, widely expressed throughout the adult brain where it is found mainly in neurons. Also expressed in the adrenal medulla. Not detected in non-neural tissues including heart, spleen, liver and muscle. In the embryo, expressed in the developing brain and spinal cord but not in the migratory neural crest. Also expressed in the limbs, transiently in somites, and in the embryonic liver. In the embryonic neural tube, expression is restricted to late postmitotic neurons.

The protein localises to the nucleus. It localises to the chromosome. Its function is as follows. Transcriptional regulator with bimodal DNA-binding specificity. Binds with a higher affinity to methylated CpG dinucleotides in the consensus sequence 5'-CGCG-3' but can also bind to E-box elements (5'-CACGTG-3'). Can also bind specifically to a single methyl-CpG pair. Represses transcription in a methyl-CpG-dependent manner. Plays an important role in regulating DNA-replication and common fragile sites (CFS) stability in a RBBP6- and MCM10-dependent manner; represses expression of MCM10 which plays an important role in DNA-replication. Acts as a transcriptional activator. May be involved in the differentiation and/or survival of late postmitotic neurons. The polypeptide is Zinc finger and BTB domain-containing protein 38 (Rattus norvegicus (Rat)).